A 351-amino-acid chain; its full sequence is Selenide, water dikinase (351 aa).

Sec15 is an active-site residue. Sec15 is a non-standard amino acid (selenocysteine). ATP contacts are provided by residues Lys18 and 47 to 49 (DNE). Asp50 is a Mg(2+) binding site. Residues Asp67, Asp90, and 138-140 (GHS) each bind ATP. Mg(2+) is bound at residue Asp90. Asp227 contacts Mg(2+).

Belongs to the selenophosphate synthase 1 family. Class I subfamily. Homodimer. The cofactor is Mg(2+).

The enzyme catalyses hydrogenselenide + ATP + H2O = selenophosphate + AMP + phosphate + 2 H(+). Functionally, synthesizes selenophosphate from selenide and ATP. This chain is Selenide, water dikinase, found in Nitratidesulfovibrio vulgaris (strain ATCC 29579 / DSM 644 / CCUG 34227 / NCIMB 8303 / VKM B-1760 / Hildenborough) (Desulfovibrio vulgaris).